The sequence spans 280 residues: MNILIALIPALGWGIFSLIAGKIKNSHPANELMGLGTGALIIGIITAIIHPASSNITIFSLSLISGMFCALGQSGQFISMRNIGISKTMPLSTGFQLIGNTLIGAIIFGEWTSSSQYLIGTLALILIIVGVSLTAISKDKSAKLKMRDIILLLFTSIGYWIYSSFPKAITANAQTLFLPQMIGIFIGSIIFLLVSRQTKVLKEKATWLNIFSGFSYGIAAFSYIFSAQLNGVITAFIYSQLCVIISTLGGIFFIGENKTKSELIATFVGLILIIIGAAIQ.

The next 10 membrane-spanning stretches (helical) occupy residues 4 to 21 (LIALIPALGWGIFSLIAG), 33 to 52 (MGLGTGALIIGIITAIIHPA), 56 to 78 (ITIFSLSLISGMFCALGQSGQFI), 91 to 113 (LSTGFQLIGNTLIGAIIFGEWTS), 117 to 136 (YLIGTLALILIIVGVSLTAI), 149 to 166 (IILLLFTSIGYWIYSSFP), 176 to 195 (LFLPQMIGIFIGSIIFLLVS), 207 to 229 (WLNIFSGFSYGIAAFSYIFSAQL), 233 to 255 (ITAFIYSQLCVIISTLGGIFFIG), and 262 to 279 (ELIATFVGLILIIIGAAI).

The protein belongs to the GRP transporter (TC 2.A.7.5) family.

The protein resides in the cell membrane. The protein is Putative sugar uptake protein of Lactobacillus helveticus (Lactobacillus suntoryeus).